A 1189-amino-acid polypeptide reads, in one-letter code: Phosphatidylinositol 3,4,5-trisphosphate 5-phosphatase 1 (1189 aa).

The 97-residue stretch at 5-101 folds into the SH2 domain; that stretch reads WNHGNITRSK…GLVTHLQYPV (97 aa). Over residues 103 to 117 the composition is skewed to acidic residues; that stretch reads LEEEDTGDDPEEDTV. The segment at 103–132 is disordered; that stretch reads LEEEDTGDDPEEDTVESVVSPPELPPRNIP. The SH3-binding 1 motif lies at 124–129; that stretch reads PELPPR. A Phosphoserine modification is found at S243. The disordered stretch occupies residues 870–906; it reads TERDESSGPKTLKSLTSHDPMKQWEVTSRAPPCSGSS. The NPXY motif 1 signature appears at 912 to 915; it reads NPNY. At Y915 the chain carries Phosphotyrosine. The disordered stretch occupies residues 922-1189; the sequence is GPPMPLHVKQ…PGPLGRTAMQ (268 aa). Over residues 931 to 943 the composition is skewed to polar residues; that stretch reads QTLSPDQQPTAWS. Residue S934 is modified to Phosphoserine. Y944 carries the post-translational modification Phosphotyrosine. A Phosphoserine modification is found at S960. Residues 961-971 show a composition bias toward pro residues; sequence PPTPPGQPPIS. Phosphothreonine is present on T963. Residues 969-974 carry the SH3-binding 2 motif; sequence PISPKK. S971 is subject to Phosphoserine. The interval 1016-1030 is interaction with DAB2; that stretch reads MFENPLYGSLSSFPK. Positions 1019–1022 match the NPXY motif 2 motif; the sequence is NPLY. The residue at position 1022 (Y1022) is a Phosphotyrosine. Residues 1033-1047 are compositionally biased toward basic and acidic residues; sequence PRKDQESPKMPRKEP. The short motif at 1040–1051 is the SH3-binding 3 element; sequence PKMPRKEPPPCP. Pro residues predominate over residues 1134–1145; sequence PPTPTPRPPLPV. A compositionally biased stretch (basic and acidic residues) spans 1157–1177; that stretch reads KGRDYRDNTELPHHGKHRPEE.

It belongs to the inositol 1,4,5-trisphosphate 5-phosphatase family. Interacts with tyrosine phosphorylated form of SHC1. Interacts with tyrosine phosphorylated form of DOK1. Interacts with tyrosine phosphorylated form of DOK3. Interacts with tyrosine phosphorylated form of SLAMF1/CD150. Interacts with PTPN11 in response to IL-3. Interacts with receptor EPOR. Interacts with receptors MS4A2/FCER1B and FCER1G. Interacts with receptors FCGR2B and FCGR3. Interacts with receptor FCGR2A, leading to regulate gene expression during the phagocytic process. Interacts with GRB2. Interacts with PLCG1. Interacts with tyrosine kinases SRC and TEC. Interacts with c-Met/MET. Interacts with MILR1 (tyrosine-phosphorylated). Can weakly interact (via NPXY motif 2) with DAB2 (via PID domain); the interaction is impaired by tyrosine phosphorylation of the NPXY motif. Interacts with FCRL3 and FCRL6 (tyrosine phosphorylated form). Interacts (via SH2 domain) with tyrosine phosphorylated KLRC1 (via ITIM). Interacts with MPL/TPOR. Tyrosine phosphorylated by the members of the SRC family after exposure to a diverse array of extracellular stimuli such as cytokines, growth factors, antibodies, chemokines, integrin ligands and hypertonic and oxidative stress. Phosphorylated upon IgG receptor FCGR2B-binding. As to expression, specifically expressed in immune and hematopoietic cells. Expressed in bone marrow and blood cells. Levels vary considerably within this compartment. Present in at least 74% of immature CD34+ cells, whereas within the more mature population of CD33+ cells, it is present in only 10% of cells. Present in the majority of T-cells, while it is present in a minority of B-cells (at protein level).

It localises to the cytoplasm. Its subcellular location is the cell membrane. The protein localises to the membrane raft. The protein resides in the cytoskeleton. It is found in the membrane. It carries out the reaction a 1,2-diacyl-sn-glycero-3-phospho-(1D-myo-inositol-3,4,5-trisphosphate) + H2O = a 1,2-diacyl-sn-glycero-3-phospho-(1D-myo-inositol-3,4-bisphosphate) + phosphate. The catalysed reaction is 1D-myo-inositol 1,3,4,5-tetrakisphosphate + H2O = 1D-myo-inositol 1,3,4-trisphosphate + phosphate. The enzyme catalyses a 1,2-diacyl-sn-glycero-3-phospho-(1D-myo-inositol-4,5-bisphosphate) + H2O = a 1,2-diacyl-sn-glycero-3-phospho-(1D-myo-inositol 4-phosphate) + phosphate. Its activity is regulated as follows. Activated upon translocation to the sites of synthesis of PtdIns(3,4,5)P3 in the membrane. Phosphatidylinositol (PtdIns) phosphatase that specifically hydrolyzes the 5-phosphate of phosphatidylinositol-3,4,5-trisphosphate (PtdIns(3,4,5)P3) to produce PtdIns(3,4)P2, thereby negatively regulating the PI3K (phosphoinositide 3-kinase) pathways. Able also to hydrolyzes the 5-phosphate of phosphatidylinositol-4,5-bisphosphate (PtdIns(4,5)P3) and inositol 1,3,4,5-tetrakisphosphate. Acts as a negative regulator of B-cell antigen receptor signaling. Mediates signaling from the FC-gamma-RIIB receptor (FCGR2B), playing a central role in terminating signal transduction from activating immune/hematopoietic cell receptor systems. Acts as a negative regulator of myeloid cell proliferation/survival and chemotaxis, mast cell degranulation, immune cells homeostasis, integrin alpha-IIb/beta-3 signaling in platelets and JNK signaling in B-cells. Regulates proliferation of osteoclast precursors, macrophage programming, phagocytosis and activation and is required for endotoxin tolerance. Involved in the control of cell-cell junctions, CD32a signaling in neutrophils and modulation of EGF-induced phospholipase C activity. Key regulator of neutrophil migration, by governing the formation of the leading edge and polarization required for chemotaxis. Modulates FCGR3/CD16-mediated cytotoxicity in NK cells. Mediates the activin/TGF-beta-induced apoptosis through its Smad-dependent expression. The polypeptide is Phosphatidylinositol 3,4,5-trisphosphate 5-phosphatase 1 (INPP5D) (Homo sapiens (Human)).